A 134-amino-acid chain; its full sequence is Ribonuclease P protein component (134 aa).

This sequence belongs to the RnpA family. In terms of assembly, consists of a catalytic RNA component (M1 or rnpB) and a protein subunit.

It catalyses the reaction Endonucleolytic cleavage of RNA, removing 5'-extranucleotides from tRNA precursor.. In terms of biological role, RNaseP catalyzes the removal of the 5'-leader sequence from pre-tRNA to produce the mature 5'-terminus. It can also cleave other RNA substrates such as 4.5S RNA. The protein component plays an auxiliary but essential role in vivo by binding to the 5'-leader sequence and broadening the substrate specificity of the ribozyme. This Pseudomonas putida (strain ATCC 700007 / DSM 6899 / JCM 31910 / BCRC 17059 / LMG 24140 / F1) protein is Ribonuclease P protein component.